The primary structure comprises 385 residues: Heat-inducible transcription repressor HrcA (385 aa).

This sequence belongs to the HrcA family.

Negative regulator of class I heat shock genes (grpE-dnaK-dnaJ and groELS operons). Prevents heat-shock induction of these operons. This chain is Heat-inducible transcription repressor HrcA, found in Protochlamydia amoebophila (strain UWE25).